A 337-amino-acid polypeptide reads, in one-letter code: Fructose-1,6-bisphosphatase class 1 (337 aa).

Glu94, Asp116, Leu118, and Asp119 together coordinate Mg(2+). Substrate contacts are provided by residues 119–122, Asn210, and Lys276; that span reads DGSS. Residue Glu282 coordinates Mg(2+).

The protein belongs to the FBPase class 1 family. In terms of assembly, homotetramer. It depends on Mg(2+) as a cofactor.

It localises to the cytoplasm. The enzyme catalyses beta-D-fructose 1,6-bisphosphate + H2O = beta-D-fructose 6-phosphate + phosphate. It functions in the pathway carbohydrate biosynthesis; gluconeogenesis. The sequence is that of Fructose-1,6-bisphosphatase class 1 from Burkholderia cenocepacia (strain HI2424).